The primary structure comprises 324 residues: Inhibitor of growth protein 1 homolog (324 aa).

The tract at residues 120–237 (AEEEKKKKKS…SSRKQKSMAA (118 aa)) is disordered. Residues 140 to 169 (SSTTSSSSSSSSSSLSLSSSTNNTSSLNSS) show a composition bias toward low complexity. A compositionally biased stretch (gly residues) spans 170 to 186 (SGGGGGGSGGGGGGGGH). The span at 201 to 229 (SLTSSSSSGNINGMSSSSSSSSSSSSLSS) shows a compositional bias: low complexity. The PHD-type zinc-finger motif lies at 271–320 (PTYCFCNRVSFGEMVGCENPDCKIEWFHFECVGLTSTPKGKWYCPDCTRI). The Zn(2+) site is built by Cys274, Cys276, Cys287, Cys292, His298, Cys301, Cys314, and Cys317.

It belongs to the ING family. Interacts with H3K4me3 and to a lesser extent with H3K4me2.

The protein localises to the nucleus. Functionally, involved in regulation of the growth and differentiation transition (GDT) process, probably by regulating gene expression via histone modification. The sequence is that of Inhibitor of growth protein 1 homolog from Dictyostelium discoideum (Social amoeba).